Reading from the N-terminus, the 72-residue chain is Large ribosomal subunit protein bL32c (72 aa).

A disordered region spans residues 49–72; the sequence is PPAPVSENWDDEAKGFGKDLDAAE. The segment covering 59–72 has biased composition (basic and acidic residues); the sequence is DEAKGFGKDLDAAE.

The protein belongs to the bacterial ribosomal protein bL32 family.

It is found in the plastid. Its subcellular location is the chloroplast. The polypeptide is Large ribosomal subunit protein bL32c (Ostreococcus tauri).